The primary structure comprises 356 residues: 4-hydroxy-3-methylbut-2-en-1-yl diphosphate synthase (flavodoxin) (356 aa).

The [4Fe-4S] cluster site is built by C262, C265, C297, and E304.

It belongs to the IspG family. [4Fe-4S] cluster serves as cofactor.

The enzyme catalyses (2E)-4-hydroxy-3-methylbut-2-enyl diphosphate + oxidized [flavodoxin] + H2O + 2 H(+) = 2-C-methyl-D-erythritol 2,4-cyclic diphosphate + reduced [flavodoxin]. The protein operates within isoprenoid biosynthesis; isopentenyl diphosphate biosynthesis via DXP pathway; isopentenyl diphosphate from 1-deoxy-D-xylulose 5-phosphate: step 5/6. Converts 2C-methyl-D-erythritol 2,4-cyclodiphosphate (ME-2,4cPP) into 1-hydroxy-2-methyl-2-(E)-butenyl 4-diphosphate. In Campylobacter fetus subsp. fetus (strain 82-40), this protein is 4-hydroxy-3-methylbut-2-en-1-yl diphosphate synthase (flavodoxin).